A 687-amino-acid polypeptide reads, in one-letter code: UvrABC system protein B (687 aa).

Residues 26–414 (EGLAAGEMYQ…GAVIEQVVRP (389 aa)) form the Helicase ATP-binding domain. ATP is bound at residue 39–46 (GVTGSGKT). Residues 92 to 115 (YYDYYQPEAYVPASDTYIGKDASV) carry the Beta-hairpin motif. The region spanning 430 to 596 (QVDDLLSEIR…GIQKAVREII (167 aa)) is the Helicase C-terminal domain. Residues 630–665 (AKRLQQLERQMHKHAQNLEFEQAARLRDEIKRIKGW) form the UVR domain.

This sequence belongs to the UvrB family. Forms a heterotetramer with UvrA during the search for lesions. Interacts with UvrC in an incision complex.

The protein localises to the cytoplasm. Its function is as follows. The UvrABC repair system catalyzes the recognition and processing of DNA lesions. A damage recognition complex composed of 2 UvrA and 2 UvrB subunits scans DNA for abnormalities. Upon binding of the UvrA(2)B(2) complex to a putative damaged site, the DNA wraps around one UvrB monomer. DNA wrap is dependent on ATP binding by UvrB and probably causes local melting of the DNA helix, facilitating insertion of UvrB beta-hairpin between the DNA strands. Then UvrB probes one DNA strand for the presence of a lesion. If a lesion is found the UvrA subunits dissociate and the UvrB-DNA preincision complex is formed. This complex is subsequently bound by UvrC and the second UvrB is released. If no lesion is found, the DNA wraps around the other UvrB subunit that will check the other stand for damage. The chain is UvrABC system protein B from Nitrosococcus oceani (strain ATCC 19707 / BCRC 17464 / JCM 30415 / NCIMB 11848 / C-107).